The chain runs to 359 residues: DNA replication and repair protein RecF (359 aa).

Residue 30–37 participates in ATP binding; the sequence is GQNAQGKT.

The protein belongs to the RecF family.

It localises to the cytoplasm. In terms of biological role, the RecF protein is involved in DNA metabolism; it is required for DNA replication and normal SOS inducibility. RecF binds preferentially to single-stranded, linear DNA. It also seems to bind ATP. This is DNA replication and repair protein RecF from Lactococcus lactis subsp. cremoris (strain SK11).